The following is a 466-amino-acid chain: Argininosuccinate lyase (466 aa).

This sequence belongs to the lyase 1 family. Argininosuccinate lyase subfamily.

The protein localises to the cytoplasm. The catalysed reaction is 2-(N(omega)-L-arginino)succinate = fumarate + L-arginine. It functions in the pathway amino-acid biosynthesis; L-arginine biosynthesis; L-arginine from L-ornithine and carbamoyl phosphate: step 3/3. The polypeptide is Argininosuccinate lyase (Microcystis aeruginosa (strain NIES-843 / IAM M-2473)).